A 289-amino-acid chain; its full sequence is MTLNVKGEGLGAQITGVDPKNLDDITTDEIRDIVYANKLVILKDVNPSPEEFLKLGKIVGQIVPYYEPMYHHEDHPEIFVSSTEEGQGVPKTGAFWHIDYMFMPEPFAFSMVLPLAVPGHDRGTYFIDLAKVWQSLPAAQQAPARGTLSTHDPRRHIKIRPSDVYRPIGEVWDEISRATPPIKWPTVIRHPKTGEEILYICATGTTKIEDKDGNLVDPAVLAELLAATGQLDPEYNSPFIHTQHYEVGDIILWDNRVLMHRAKHGTASGTLTTYRLTMLDGLETPGYPA.

Residues Tyr-65, Tyr-70, and Gly-93 each contribute to the a (3R)-3-[(carboxymethyl)amino]fatty acid site. Fe(2+) contacts are provided by His-97 and Asp-99. Tyr-100 and Lys-158 together coordinate a (3R)-3-[(carboxymethyl)amino]fatty acid. Fe(2+) is bound at residue His-260. His-264 is a 2-oxoglutarate binding site. Arg-275 is an a (3R)-3-[(carboxymethyl)amino]fatty acid binding site.

Belongs to the TfdA dioxygenase family. Fe(2+) is required as a cofactor.

It carries out the reaction a (3R)-3-[(carboxymethyl)amino]fatty acid + 2 2-oxoglutarate + 2 O2 = a (3R)-3-isocyanyl-fatty acid + 2 succinate + 3 CO2 + 2 H2O. The enzyme catalyses a (3R)-3-[(carboxymethyl)amino]fatty acid + 2-oxoglutarate + O2 = a (3R)-3-{[carboxy(hydroxy)methyl]amino}fatty acid + succinate + CO2. The catalysed reaction is a (3R)-3-{[carboxy(hydroxy)methyl]amino}fatty acid + 2-oxoglutarate + O2 = a (3R)-3-isocyanyl-fatty acid + succinate + 2 CO2 + 2 H2O. Involved in the biosynthesis of a unique class of isonitrile lipopeptides (INLPs) that seem to play a role in metal acquisition in M.marinum. Catalyzes the conversion of (3R)-3-[(carboxymethyl)amino]fatty acids to (3R)-3-isocyanyl-fatty acids through an oxidative decarboxylation mechanism, thereby generating the isonitrile group of INLPs. The protein is (3R)-3-[(carboxymethyl)amino]fatty acid oxygenase/decarboxylase of Mycobacterium marinum (strain ATCC BAA-535 / M).